The sequence spans 621 residues: Rab proteins geranylgeranyltransferase component A 2 (621 aa).

Positions 113–171 are disordered; it reads VQDTETLQRSSPLEASATPADSLDSASLPKERQSAYSTSYEVPSRHTEESDRELSLPSA. Residues 115-125 show a composition bias toward polar residues; it reads DTETLQRSSPL. Residues 155 to 166 show a composition bias toward basic and acidic residues; sequence PSRHTEESDREL.

It belongs to the Rab GDI family. Monomer. Heterotrimer composed of RABGGTA, RABGGTB and CHML; within this trimer, RABGGTA and RABGGTB form the catalytic component B, while CHML (component A) mediates Rab protein binding. Interacts with RAB1A, RAB7A and RAB27A, but has much lower affinity for RAB1A, RAB7A and RAB27A than CHM. Interacts with the non-phosphorylated forms of RAB3A, RAB3B, RAB3C, RAB3D, RAB5B, RAB5C, RAB8A, RAB8B, RAB10, RAB12, RAB35, and RAB43.

The protein localises to the cytoplasm. The protein resides in the cytosol. Substrate-binding subunit (component A) of the Rab geranylgeranyltransferase (GGTase) complex. Binds unprenylated Rab proteins and presents the substrate peptide to the catalytic component B. The component A is thought to be regenerated by transferring its prenylated Rab back to the donor membrane. Less effective than CHM in supporting prenylation of Rab3 family. In Mus musculus (Mouse), this protein is Rab proteins geranylgeranyltransferase component A 2 (Chml).